Reading from the N-terminus, the 402-residue chain is MPAGTAARAWVLVLALWGAVAGGQNITARIGEPLVLSCKGAPKKPPQQLEWKLNTGRTEAWKVLSPQGGPWDSVARILPNGSLLLPATGIVDEGTFRCRATNRRGKEVKSNYRVRVYQIPGKPEIVDPASELTASVPNKVGTCVSEGSYPAGTLSWHLDGKLLIPDGKETLVKEETRRHPETGLFTLRSELTVIPTQGGTHPTFSCSFSLGLPRRRPLNTAPIQLRVREPGPPEGIQLLVEPEGGIVAPGGTVTLTCAISAQPPPQVHWIKDGAPLPLAPSPVLLLPEVGHEDEGTYSCVATHPSHGPQESPPVSIRVTETGDEGPAEGSVGESGLGTLALALGILGGLGVVALLVGAILWRKRQPRREERKAPESQEDEEERAELNQSEEAEMPENGAGGP.

The first 22 residues, 1-22 (MPAGTAARAWVLVLALWGAVAG), serve as a signal peptide directing secretion. Residues 23–109 (GQNITARIGE…ATNRRGKEVK (87 aa)) enclose the Ig-like V-type domain. Over 23-340 (GQNITARIGE…VGESGLGTLA (318 aa)) the chain is Extracellular. N-linked (GlcNAc...) asparagine glycosylation is found at asparagine 25 and asparagine 80. Disulfide bonds link cysteine 38-cysteine 98 and cysteine 143-cysteine 206. 2 consecutive Ig-like C2-type domains span residues 123-219 (PEIV…RPLN) and 233-315 (PEGI…PPVS). The disordered stretch occupies residues 295-332 (GTYSCVATHPSHGPQESPPVSIRVTETGDEGPAEGSVG). A helical transmembrane segment spans residues 341–361 (LALGILGGLGVVALLVGAILW). Residues 362–402 (RKRQPRREERKAPESQEDEEERAELNQSEEAEMPENGAGGP) lie on the Cytoplasmic side of the membrane. The interval 365-402 (QPRREERKAPESQEDEEERAELNQSEEAEMPENGAGGP) is disordered. Phosphoserine; by ATM is present on residues serine 376 and serine 389. The segment covering 376–394 (SQEDEEERAELNQSEEAEM) has biased composition (acidic residues).

In terms of assembly, constitutive homodimer; disulfide-linked. Forms homooligomers. Interacts with S100A1 and APP. Interacts with S100B, S100A12 and S100A14. Interacts with TIRAP. Interacts with HMGB1. Interacts with LGP2; this interaction plays an important role in AGER-mediated pro-inflammatory responses and cytokine release. Interacts with double-strand break repair protein MRE11 which is a core component of the MRN complex; the interaction enhances MRE11 endonuclease activity and promotes DNA repair. Interacts with the MCM2-7 complex via interaction with complex member MCM2; the interaction is increased following DNA replication stress and stabilizes the MCM2-7 complex at replication forks. Phosphorylated on its cytoplasmic domain by PKCzeta/PRKCZ upon ligand binding. Phosphorylated by ATM following DNA damage. Post-translationally, targeted by the ubiquitin E3 ligase subunit FBXO10 to mediate its ubiquitination and degradation. In terms of tissue distribution, isoform 1: Expressed at higher levels in the coronary arterioles in type 2 diabetic mice (at protein level). Endothelial cells. Expressed in lung, kidney, brain and heart. Most prevalent isoform with the highest level in heart. Isoform 2: Expressed in brain, lung, kidney and small intestine with the highest level in lung. Expressed in brain, lung, kidney and small intestine with the highest level in small intestine (at protein level). Detected in neurons of the cerebrum, bronchial epithelium, endothelial cells, tubular cells of kidney and epithelial cells of small intestine (at protein level). Expression is increased in the kidney of diabetic wild-type mice (at protein level), but not in the other tissues. Expressed only in kidney. Expression is increased in the kidney of diabetic mice. Isoform 3: Expressed in lung, kidney and heart. The second most prevalent isoform with the highest level in lung. Not expressed in brain. Isoform 4: Expressed at very low level in lung only. Isoform 5: Expressed at very low level in lung only. Isoform 6: Expressed at very low level in lung only. Isoform 7: Expressed at very low level in heart only. Isoform 8: Expressed at very low level in lung only. Isoform 9: Expressed at very low level in heart only. Isoform 10: Expressed in lung, brain, heart and kidney with a very high level in kidney. Isoform 11: Expressed in brain, kidney and heart. Not expressed in lung. Isoform 12: Expressed at very low level in lung and kidney. Isoform 13: Expressed at very low level in lung only.

It is found in the cell membrane. Its subcellular location is the cell projection. It localises to the phagocytic cup. The protein resides in the early endosome. The protein localises to the nucleus. It is found in the secreted. Its function is as follows. Cell surface pattern recognition receptor that senses endogenous stress signals with a broad ligand repertoire including advanced glycation end products, S100 proteins, high-mobility group box 1 protein/HMGB1, amyloid beta/APP oligomers, nucleic acids, histones, phospholipids and glycosaminoglycans. Advanced glycosylation end products are nonenzymatically glycosylated proteins which accumulate in vascular tissue in aging and at an accelerated rate in diabetes. These ligands accumulate at inflammatory sites during the pathogenesis of various diseases including diabetes, vascular complications, neurodegenerative disorders and cancers, and RAGE transduces their binding into pro-inflammatory responses. Upon ligand binding, uses TIRAP and MYD88 as adapters to transduce the signal ultimately leading to the induction of inflammatory cytokines IL6, IL8 and TNFalpha through activation of NF-kappa-B. Interaction with S100A12 on endothelium, mononuclear phagocytes, and lymphocytes triggers cellular activation, with generation of key pro-inflammatory mediators. Interaction with S100B after myocardial infarction may play a role in myocyte apoptosis by activating ERK1/2 and p53/TP53 signaling. Contributes to the translocation of amyloid-beta peptide (ABPP) across the cell membrane from the extracellular to the intracellular space in cortical neurons. ABPP-initiated RAGE signaling, especially stimulation of p38 mitogen-activated protein kinase (MAPK), has the capacity to drive a transport system delivering ABPP as a complex with RAGE to the intraneuronal space. Participates in endothelial albumin transcytosis together with HMGB1 through the RAGE/SRC/Caveolin-1 pathway, leading to endothelial hyperpermeability. Mediates the loading of HMGB1 in extracellular vesicles (EVs) that shuttle HMGB1 to hepatocytes by transferrin-mediated endocytosis and subsequently promote hepatocyte pyroptosis by activating the NLRP3 inflammasome. Binds to DNA and promotes extracellular hypomethylated DNA (CpG DNA) uptake by cells via the endosomal route to activate inflammatory responses. Mediates phagocytosis by non-professional phagocytes (NPP) and this is enhanced by binding to ligands including RNA, DNA, HMGB1 and histones. Promotes NPP-mediated phagocytosis of Saccharomyces cerevisiae spores by binding to RNA attached to the spore wall. Also promotes NPP-mediated phagocytosis of apoptotic cells. Following DNA damage, recruited to DNA double-strand break sites where it colocalizes with the MRN repair complex via interaction with double-strand break repair protein MRE11. Enhances the endonuclease activity of MRE11, promoting the end resection of damaged DNA. Promotes DNA damage repair in trophoblasts which enhances trophoblast invasion and contributes to placental development and maintenance. Protects cells from DNA replication stress by localizing to damaged replication forks where it stabilizes the MCM2-7 complex and promotes faithful progression of the replication fork. Functionally, is able to advanced glycosylation end product (AGE)-induce nuclear factor NF-kappa-B activation. Down-regulates receptor for advanced glycosylation end products (RAGE)-ligand induced signaling through various MAPK pathways including ERK1/2, p38 and SAPK/JNK. Significantly affects tumor cell properties through decreasing cell migration, invasion, adhesion and proliferation, and increasing cellular apoptosis. Exhibits drastic inhibition on tumorigenesis in vitro. The protein is Advanced glycosylation end product-specific receptor (Ager) of Mus musculus (Mouse).